The sequence spans 282 residues: Bifunctional protein FolD (282 aa).

NADP(+) contacts are provided by residues 164-166 (GAS), Ile-189, and Ile-230.

The protein belongs to the tetrahydrofolate dehydrogenase/cyclohydrolase family. Homodimer.

It carries out the reaction (6R)-5,10-methylene-5,6,7,8-tetrahydrofolate + NADP(+) = (6R)-5,10-methenyltetrahydrofolate + NADPH. The enzyme catalyses (6R)-5,10-methenyltetrahydrofolate + H2O = (6R)-10-formyltetrahydrofolate + H(+). It participates in one-carbon metabolism; tetrahydrofolate interconversion. In terms of biological role, catalyzes the oxidation of 5,10-methylenetetrahydrofolate to 5,10-methenyltetrahydrofolate and then the hydrolysis of 5,10-methenyltetrahydrofolate to 10-formyltetrahydrofolate. The chain is Bifunctional protein FolD from Nitratiruptor sp. (strain SB155-2).